The sequence spans 346 residues: MQFPEITPLDDALRPELQAAIDDKTKPLGALGRLESLALQLGLILGTARPVLQRPTVIVFAADHGVADAGVSAYPAEVTAQMVQNFLAGGAAINVFSRQHGIALEIVDAGVRAPLPAAPGLVNCRIADGTRNFAVEPAMTPEQAAAAMTAGMARVLRHAQQGCNVIGFGEMGIANTSAAACLMQRLTGLPLADCIGRGTGLDDAGLARKREVLERALALHADAQAPLDVLATFGGFEIAMMAGAFLAAAASRMVILVDGFIATAALLVAQRLDPNVLQYCVFTHCSHERGHRALLDQFGAAPLLALDLRLGEGTGAALAWPLLASAAAFLNEMATFSGAGVSTASP.

Glu-312 (proton acceptor) is an active-site residue.

It belongs to the CobT family.

The catalysed reaction is 5,6-dimethylbenzimidazole + nicotinate beta-D-ribonucleotide = alpha-ribazole 5'-phosphate + nicotinate + H(+). It functions in the pathway nucleoside biosynthesis; alpha-ribazole biosynthesis; alpha-ribazole from 5,6-dimethylbenzimidazole: step 1/2. Functionally, catalyzes the synthesis of alpha-ribazole-5'-phosphate from nicotinate mononucleotide (NAMN) and 5,6-dimethylbenzimidazole (DMB). In Cupriavidus necator (strain ATCC 17699 / DSM 428 / KCTC 22496 / NCIMB 10442 / H16 / Stanier 337) (Ralstonia eutropha), this protein is Nicotinate-nucleotide--dimethylbenzimidazole phosphoribosyltransferase.